Here is a 163-residue protein sequence, read N- to C-terminus: 2-C-methyl-D-erythritol 2,4-cyclodiphosphate synthase (163 aa).

A divalent metal cation contacts are provided by D11 and H13. 4-CDP-2-C-methyl-D-erythritol 2-phosphate contacts are provided by residues D11–H13 and H37–S38. H45 provides a ligand contact to a divalent metal cation. Residues D59 to G61, F64 to D68, A103 to A109, and R145 contribute to the 4-CDP-2-C-methyl-D-erythritol 2-phosphate site.

Belongs to the IspF family. As to quaternary structure, homotrimer. A divalent metal cation is required as a cofactor.

The catalysed reaction is 4-CDP-2-C-methyl-D-erythritol 2-phosphate = 2-C-methyl-D-erythritol 2,4-cyclic diphosphate + CMP. Its pathway is isoprenoid biosynthesis; isopentenyl diphosphate biosynthesis via DXP pathway; isopentenyl diphosphate from 1-deoxy-D-xylulose 5-phosphate: step 4/6. Functionally, involved in the biosynthesis of isopentenyl diphosphate (IPP) and dimethylallyl diphosphate (DMAPP), two major building blocks of isoprenoid compounds. Catalyzes the conversion of 4-diphosphocytidyl-2-C-methyl-D-erythritol 2-phosphate (CDP-ME2P) to 2-C-methyl-D-erythritol 2,4-cyclodiphosphate (ME-CPP) with a corresponding release of cytidine 5-monophosphate (CMP). This Nitrosomonas europaea (strain ATCC 19718 / CIP 103999 / KCTC 2705 / NBRC 14298) protein is 2-C-methyl-D-erythritol 2,4-cyclodiphosphate synthase.